We begin with the raw amino-acid sequence, 1523 residues long: Disco-interacting protein 2 homolog A (1523 aa).

The DMAP1-binding domain maps to 9-105 (EAAPLPAEVL…TSSASEDEGS (97 aa)). The interval 72–110 (KMPMPSKRRSALVHSSVETYTPPDTSSASEDEGSLRRPG) is disordered. The segment covering 87 to 99 (SVETYTPPDTSSA) has biased composition (polar residues). 2 positions are modified to phosphothreonine: T92 and T115. A disordered region spans residues 132 to 158 (QGSSTSSSASSTSSHPGGRPAAAPSAS). The segment covering 134–158 (SSTSSSASSTSSHPGGRPAAAPSAS) has biased composition (low complexity). 2 consecutive short sequence motifs (PXXP motif; required for interaction with CTTN) follow at residues 235-238 (PKRP) and 259-262 (PNQP).

The protein belongs to the DIP2 family. Interacts with FSTL1; DIP2A may act as a cell surface receptor for FSTL1. Interacts (via N-terminus) with CTTN (via SH3 domain); the interaction promotes acetylation of CTTN and is required for proper synaptic transmission. Interacts with SHANK3. As to expression, detected in heart, liver, spleen, lung, kidney and brain with highest levels in brain (at protein level). In adult cortex, preferentially expressed in excitatory neurons. Broadly expressed in neuronal, reproductive and vascular tissues as well as in heart, kidney, liver and lung with expression detected in neurons, mesenchyme, endothelium, smooth muscle cells and cardiomyocytes. Expressed in ectoderm-derived tissues in the developing embryo. Expressed in the developing nervous system.

The protein resides in the cell membrane. It is found in the mitochondrion. It localises to the cell projection. Its subcellular location is the dendritic spine. It carries out the reaction acetate + ATP + CoA = acetyl-CoA + AMP + diphosphate. In terms of biological role, catalyzes the de novo synthesis of acetyl-CoA in vitro. Promotes acetylation of CTTN, possibly by providing the acetyl donor, ensuring correct dendritic spine morphology and synaptic transmission. Binds to follistatin-related protein FSTL1 and may act as a cell surface receptor for FSTL1, contributing to AKT activation and subsequent FSTL1-induced survival and function of endothelial cells and cardiac myocytes. In Mus musculus (Mouse), this protein is Disco-interacting protein 2 homolog A (Dip2a).